We begin with the raw amino-acid sequence, 275 residues long: 2,3,4,5-tetrahydropyridine-2,6-dicarboxylate N-succinyltransferase (275 aa).

It belongs to the transferase hexapeptide repeat family.

It is found in the cytoplasm. It carries out the reaction (S)-2,3,4,5-tetrahydrodipicolinate + succinyl-CoA + H2O = (S)-2-succinylamino-6-oxoheptanedioate + CoA. Its pathway is amino-acid biosynthesis; L-lysine biosynthesis via DAP pathway; LL-2,6-diaminopimelate from (S)-tetrahydrodipicolinate (succinylase route): step 1/3. The protein is 2,3,4,5-tetrahydropyridine-2,6-dicarboxylate N-succinyltransferase of Burkholderia multivorans (strain ATCC 17616 / 249).